The following is a 497-amino-acid chain: uncharacterized protein (497 aa).

Residue 266 to 273 coordinates ATP; sequence GIQGTGKS.

Belongs to the AAA ATPase family. Highly divergent.

It localises to the plastid. It is found in the chloroplast. This is an uncharacterized protein from Trieres chinensis (Marine centric diatom).